The chain runs to 200 residues: Holliday junction branch migration complex subunit RuvA (200 aa).

A domain I region spans residues M1–P63. The interval D64–P142 is domain II. Positions P142 to G146 are flexible linker. The domain III stretch occupies residues G147–R200.

It belongs to the RuvA family. In terms of assembly, homotetramer. Forms an RuvA(8)-RuvB(12)-Holliday junction (HJ) complex. HJ DNA is sandwiched between 2 RuvA tetramers; dsDNA enters through RuvA and exits via RuvB. An RuvB hexamer assembles on each DNA strand where it exits the tetramer. Each RuvB hexamer is contacted by two RuvA subunits (via domain III) on 2 adjacent RuvB subunits; this complex drives branch migration. In the full resolvosome a probable DNA-RuvA(4)-RuvB(12)-RuvC(2) complex forms which resolves the HJ.

Its subcellular location is the cytoplasm. In terms of biological role, the RuvA-RuvB-RuvC complex processes Holliday junction (HJ) DNA during genetic recombination and DNA repair, while the RuvA-RuvB complex plays an important role in the rescue of blocked DNA replication forks via replication fork reversal (RFR). RuvA specifically binds to HJ cruciform DNA, conferring on it an open structure. The RuvB hexamer acts as an ATP-dependent pump, pulling dsDNA into and through the RuvAB complex. HJ branch migration allows RuvC to scan DNA until it finds its consensus sequence, where it cleaves and resolves the cruciform DNA. The chain is Holliday junction branch migration complex subunit RuvA from Rhodococcus jostii (strain RHA1).